The sequence spans 660 residues: RalBP1-associated Eps domain-containing protein 2 (660 aa).

The EH 1 domain occupies Glu-34–Glu-147. The tract at residues Glu-169–Leu-208 is disordered. The residue at position 254 (Ser-254) is a Phosphoserine. Residues Gln-282–Phe-373 enclose the EH 2 domain. The EF-hand domain occupies Leu-315–Arg-350. Asp-328, Asp-330, Asp-332, and Glu-339 together coordinate Ca(2+). The segment at Asn-433–Ile-616 is disordered. Thr-479 is subject to Phosphothreonine. At Ser-493 the chain carries Phosphoserine. Pro residues predominate over residues Leu-512 to Cys-523. The interval Pro-514–Leu-660 is interaction with RALBP1. The interval Pro-561–Leu-660 is interaction with ASAP1. The segment covering Pro-582 to Thr-594 has biased composition (low complexity). Residues Val-601–Val-657 adopt a coiled-coil conformation.

In terms of assembly, interacts with EPN1; the interaction is direct. Interacts with EPS15; the interaction is direct. Interacts with EPS15L1. Interacts with RALBP1; can form a ternary complex with activated Ral (RALA or RALB). Interacts with ASAP1; the interaction is direct and this complex can bind paxillin. Also forms a ternary complex with RALBP1 and ASAP1. Interacts with GRB2. Post-translationally, tyrosine-phosphorylated upon stimulation of cells with EGF. Phosphorylation on Tyr-residues induces its association with the EGF receptor probably indirectly through an adapter like GRB2. In terms of tissue distribution, expressed at high levels in the cerebrum, cerebellum, lung, kidney, and testis. Weakly expressed in the kidney. Isoform 2 is down-regulated during progression of prostate cancer.

It is found in the cytoplasm. Functionally, involved in ligand-dependent receptor mediated endocytosis of the EGF and insulin receptors as part of the Ral signaling pathway. By controlling growth factor receptors endocytosis may regulate cell survival. Through ASAP1 may regulate cell adhesion and migration. This chain is RalBP1-associated Eps domain-containing protein 2 (REPS2), found in Homo sapiens (Human).